Here is a 219-residue protein sequence, read N- to C-terminus: MTESHIDFRRAKFLISAPDIAHLDQYLPGDVGVEIAFAGRSNAGKSSALNALTEQKSLARTSKTPGRTQLINVFELDSQRRLVDLPGYGFAQVPLAMKNKWQQALGEYLQKRACLSGVVVLMDIRHPLKDLDMQMIQWAVASEIPVLALLTKSDKLAQSAKMKTVNEVRKALADFGDWVLVEPFSALKGTGKPKVLSILNEWCHPQWLRDELDTAEQSN.

The EngB-type G domain maps to 31–205 (VGVEIAFAGR…LSILNEWCHP (175 aa)). GTP is bound by residues 39–46 (GRSNAGKS), 66–70 (GRTQL), 84–87 (DLPG), 151–154 (TKSD), and 184–186 (FSA). Residues Ser46 and Thr68 each coordinate Mg(2+).

The protein belongs to the TRAFAC class TrmE-Era-EngA-EngB-Septin-like GTPase superfamily. EngB GTPase family. It depends on Mg(2+) as a cofactor.

Necessary for normal cell division and for the maintenance of normal septation. The sequence is that of Probable GTP-binding protein EngB from Shewanella sp. (strain W3-18-1).